The chain runs to 300 residues: Actin-related protein 2/3 complex subunit 2 (300 aa).

N6-acetyllysine occurs at positions 275 and 295.

The protein belongs to the ARPC2 family. In terms of assembly, component of the Arp2/3 complex composed of ACTR2/ARP2, ACTR3/ARP3, ARPC1B/p41-ARC, ARPC2/p34-ARC, ARPC3/p21-ARC, ARPC4/p20-ARC and ARPC5/p16-ARC. Interacts with SHANK3; the interaction probably mediates the association of SHANK3 with the Arp2/3 complex.

Its subcellular location is the cytoplasm. It localises to the cytoskeleton. It is found in the cell projection. The protein localises to the synapse. The protein resides in the synaptosome. Its subcellular location is the nucleus. Actin-binding component of the Arp2/3 complex, a multiprotein complex that mediates actin polymerization upon stimulation by nucleation-promoting factor (NPF). The Arp2/3 complex mediates the formation of branched actin networks in the cytoplasm, providing the force for cell motility. Seems to contact the mother actin filament. In addition to its role in the cytoplasmic cytoskeleton, the Arp2/3 complex also promotes actin polymerization in the nucleus, thereby regulating gene transcription and repair of damaged DNA. The Arp2/3 complex promotes homologous recombination (HR) repair in response to DNA damage by promoting nuclear actin polymerization, leading to drive motility of double-strand breaks (DSBs). This is Actin-related protein 2/3 complex subunit 2 from Rattus norvegicus (Rat).